Consider the following 61-residue polypeptide: Small ribosomal subunit protein uS14B (61 aa).

4 residues coordinate Zn(2+): Cys-24, Cys-27, Cys-40, and Cys-43.

It belongs to the universal ribosomal protein uS14 family. Zinc-binding uS14 subfamily. As to quaternary structure, part of the 30S ribosomal subunit. Contacts proteins S3 and S10. Zn(2+) is required as a cofactor.

Binds 16S rRNA, required for the assembly of 30S particles and may also be responsible for determining the conformation of the 16S rRNA at the A site. The sequence is that of Small ribosomal subunit protein uS14B from Lactococcus lactis subsp. lactis (strain IL1403) (Streptococcus lactis).